Reading from the N-terminus, the 236-residue chain is tRNA1(Val) (adenine(37)-N6)-methyltransferase (236 aa).

Belongs to the methyltransferase superfamily. tRNA (adenine-N(6)-)-methyltransferase family.

Its subcellular location is the cytoplasm. The enzyme catalyses adenosine(37) in tRNA1(Val) + S-adenosyl-L-methionine = N(6)-methyladenosine(37) in tRNA1(Val) + S-adenosyl-L-homocysteine + H(+). In terms of biological role, specifically methylates the adenine in position 37 of tRNA(1)(Val) (anticodon cmo5UAC). In Actinobacillus pleuropneumoniae serotype 5b (strain L20), this protein is tRNA1(Val) (adenine(37)-N6)-methyltransferase.